A 397-amino-acid chain; its full sequence is Riboflavin biosynthesis protein RibBA (397 aa).

The interval 1–199 is DHBP synthase; that stretch reads MFHRIEEALE…IEDLIAYRRH (199 aa). Residues 26–27, aspartate 31, 138–142, and glutamate 162 each bind D-ribulose 5-phosphate; these read RE and RAGHT. Glutamate 27 is a binding site for Mg(2+). Histidine 141 is a Mg(2+) binding site. Residues 200–397 are GTP cyclohydrolase II; it reads HETLVTREAE…VNKLGHLLNL (198 aa). Residue 250–254 coordinates GTP; that stretch reads RVHSE. Zn(2+)-binding residues include cysteine 255, cysteine 266, and cysteine 268. Residues glutamine 271, 293 to 295, and threonine 315 each bind GTP; that span reads EGR. Aspartate 327 serves as the catalytic Proton acceptor; for GTP cyclohydrolase activity. The active-site Nucleophile; for GTP cyclohydrolase activity is arginine 329. GTP is bound by residues threonine 350 and lysine 355.

It in the N-terminal section; belongs to the DHBP synthase family. This sequence in the C-terminal section; belongs to the GTP cyclohydrolase II family. It depends on Mg(2+) as a cofactor. Mn(2+) is required as a cofactor. Zn(2+) serves as cofactor.

It catalyses the reaction D-ribulose 5-phosphate = (2S)-2-hydroxy-3-oxobutyl phosphate + formate + H(+). The catalysed reaction is GTP + 4 H2O = 2,5-diamino-6-hydroxy-4-(5-phosphoribosylamino)-pyrimidine + formate + 2 phosphate + 3 H(+). Its pathway is cofactor biosynthesis; riboflavin biosynthesis; 2-hydroxy-3-oxobutyl phosphate from D-ribulose 5-phosphate: step 1/1. It participates in cofactor biosynthesis; riboflavin biosynthesis; 5-amino-6-(D-ribitylamino)uracil from GTP: step 1/4. Its function is as follows. Catalyzes the conversion of D-ribulose 5-phosphate to formate and 3,4-dihydroxy-2-butanone 4-phosphate. Catalyzes the conversion of GTP to 2,5-diamino-6-ribosylamino-4(3H)-pyrimidinone 5'-phosphate (DARP), formate and pyrophosphate. This chain is Riboflavin biosynthesis protein RibBA, found in Bacillus cereus (strain ATCC 14579 / DSM 31 / CCUG 7414 / JCM 2152 / NBRC 15305 / NCIMB 9373 / NCTC 2599 / NRRL B-3711).